The sequence spans 475 residues: Sensor histidine kinase GlrK (475 aa).

Topologically, residues 1–13 (MKRWPVFPRSLRQ) are cytoplasmic. A helical transmembrane segment spans residues 14–34 (LVMLAFLLILLPLLVLAWQAW). Residues 35–173 (QSLNALSDQA…LQREIAERGQ (139 aa)) are Periplasmic-facing. The chain crosses the membrane as a helical span at residues 174-194 (YFGWQSLVLFLVSLVMVLLFT). The Cytoplasmic portion of the chain corresponds to 195–475 (RMIIGPVKNI…IELPSSKNTK (281 aa)). Positions 256-472 (HLSHELKTPL…CFRIELPSSK (217 aa)) constitute a Histidine kinase domain. H259 carries the post-translational modification Phosphohistidine; by autocatalysis.

Post-translationally, autophosphorylated.

Its subcellular location is the cell inner membrane. It carries out the reaction ATP + protein L-histidine = ADP + protein N-phospho-L-histidine.. In terms of biological role, member of the two-component regulatory system GlrR/GlrK that up-regulates transcription of the glmY sRNA when cells enter the stationary growth phase. Activates GlrR by phosphorylation. This is Sensor histidine kinase GlrK (glrK) from Escherichia coli (strain K12).